We begin with the raw amino-acid sequence, 85 residues long: Large ribosomal subunit protein bL27 (85 aa).

Belongs to the bacterial ribosomal protein bL27 family.

The sequence is that of Large ribosomal subunit protein bL27 from Persephonella marina (strain DSM 14350 / EX-H1).